A 197-amino-acid chain; its full sequence is Chaperone protein dnaJ 20, chloroplastic (197 aa).

The N-terminal 60 residues, 1 to 60 (MKCYKSSSILSTNHHPFFYKQQPISSLQPTSIPTTISYPTRTRFSSTRIQSRLTHDDPVK), are a transit peptide targeting the chloroplast. A J domain is found at 66 to 133 (SFYDLLGVTE…RRRVLYDRDL (68 aa)). The segment at 169-197 (SGLRRRSNQKDNNTMSWAARMRRQQQESS) is disordered.

Belongs to the DnaJ family. C/III subfamily. As to expression, light-grown seedlings.

It localises to the plastid. Its subcellular location is the chloroplast. Its function is as follows. Plays a continuous role in plant development probably in the structural organization of compartments. The chain is Chaperone protein dnaJ 20, chloroplastic (ATJ20) from Arabidopsis thaliana (Mouse-ear cress).